Consider the following 110-residue polypeptide: MKWLFKYLIRFYQKYLTILSFGSCRYYPTCSQYALWQLDNNTFFKAIYFTILRILKCNQLFDGGFDYPIIKLKKNQNINYNKIKIVYWYVPLKNGKYLVVKNREWKKNNE.

It belongs to the UPF0161 family.

It is found in the cell inner membrane. Could be involved in insertion of integral membrane proteins into the membrane. This Aliarcobacter butzleri (strain RM4018) (Arcobacter butzleri) protein is Putative membrane protein insertion efficiency factor.